A 138-amino-acid chain; its full sequence is Small ribosomal subunit protein bS16 (138 aa).

A disordered region spans residues 92 to 138; that stretch reads QAAKREADAKQAAKEAAEAKAAAEAEAKAAAEAESADAGAEEAPAEA. A compositionally biased stretch (basic and acidic residues) spans 94 to 122; it reads AKREADAKQAAKEAAEAKAAAEAEAKAAA.

This sequence belongs to the bacterial ribosomal protein bS16 family.

The polypeptide is Small ribosomal subunit protein bS16 (Synechococcus sp. (strain WH7803)).